The primary structure comprises 140 residues: Protein ApaG (140 aa).

In terms of domain architecture, ApaG spans Glu13–Met137.

This is Protein ApaG from Caulobacter vibrioides (strain ATCC 19089 / CIP 103742 / CB 15) (Caulobacter crescentus).